The following is a 340-amino-acid chain: Glycerol-3-phosphate dehydrogenase [NAD(P)+] (340 aa).

NADPH is bound by residues S12, W13, and K110. Residues K110, G141, and S143 each contribute to the sn-glycerol 3-phosphate site. A145 provides a ligand contact to NADPH. Sn-glycerol 3-phosphate-binding residues include K196, D249, S259, R260, and N261. Residue K196 is the Proton acceptor of the active site. R260 provides a ligand contact to NADPH. Positions 284 and 286 each coordinate NADPH.

The protein belongs to the NAD-dependent glycerol-3-phosphate dehydrogenase family.

It localises to the cytoplasm. The enzyme catalyses sn-glycerol 3-phosphate + NAD(+) = dihydroxyacetone phosphate + NADH + H(+). It carries out the reaction sn-glycerol 3-phosphate + NADP(+) = dihydroxyacetone phosphate + NADPH + H(+). It functions in the pathway membrane lipid metabolism; glycerophospholipid metabolism. In terms of biological role, catalyzes the reduction of the glycolytic intermediate dihydroxyacetone phosphate (DHAP) to sn-glycerol 3-phosphate (G3P), the key precursor for phospholipid synthesis. This Latilactobacillus sakei subsp. sakei (strain 23K) (Lactobacillus sakei subsp. sakei) protein is Glycerol-3-phosphate dehydrogenase [NAD(P)+].